Here is a 60-residue protein sequence, read N- to C-terminus: uncharacterized protein (60 aa).

The protein to E.coli YjeQ and H.influenzae HI_1714.

This is an uncharacterized protein from Azotobacter vinelandii.